Here is a 484-residue protein sequence, read N- to C-terminus: Glutamate--tRNA ligase (484 aa).

The 'HIGH' region motif lies at 11 to 21; the sequence is PSPTGYPHLGN. Residues Cys108, Cys110, Cys135, and Asp137 each contribute to the Zn(2+) site. Residues 245–249 carry the 'KMSKS' region motif; the sequence is KLSKR. Lys248 is an ATP binding site.

Belongs to the class-I aminoacyl-tRNA synthetase family. Glutamate--tRNA ligase type 1 subfamily. In terms of assembly, monomer. The cofactor is Zn(2+).

Its subcellular location is the cytoplasm. It carries out the reaction tRNA(Glu) + L-glutamate + ATP = L-glutamyl-tRNA(Glu) + AMP + diphosphate. In terms of biological role, catalyzes the attachment of glutamate to tRNA(Glu) in a two-step reaction: glutamate is first activated by ATP to form Glu-AMP and then transferred to the acceptor end of tRNA(Glu). This Dehalococcoides mccartyi (strain ATCC BAA-2266 / KCTC 15142 / 195) (Dehalococcoides ethenogenes (strain 195)) protein is Glutamate--tRNA ligase.